The primary structure comprises 159 residues: NADH-quinone oxidoreductase subunit B (159 aa).

Cysteine 37, cysteine 38, cysteine 102, and cysteine 132 together coordinate [4Fe-4S] cluster.

This sequence belongs to the complex I 20 kDa subunit family. As to quaternary structure, NDH-1 is composed of 14 different subunits. Subunits NuoB, C, D, E, F, and G constitute the peripheral sector of the complex. [4Fe-4S] cluster is required as a cofactor.

Its subcellular location is the cell inner membrane. It carries out the reaction a quinone + NADH + 5 H(+)(in) = a quinol + NAD(+) + 4 H(+)(out). In terms of biological role, NDH-1 shuttles electrons from NADH, via FMN and iron-sulfur (Fe-S) centers, to quinones in the respiratory chain. Couples the redox reaction to proton translocation (for every two electrons transferred, four hydrogen ions are translocated across the cytoplasmic membrane), and thus conserves the redox energy in a proton gradient. This Ruthia magnifica subsp. Calyptogena magnifica protein is NADH-quinone oxidoreductase subunit B.